The primary structure comprises 167 residues: Kininogen-1 (167 aa).

Residues 1 to 23 form the signal peptide; sequence MRLWFCLSFFIILCLEHFPGTLA.

This sequence belongs to the bradykinin-related peptide family. In terms of tissue distribution, expressed by the skin glands.

The protein resides in the secreted. Its function is as follows. Vasodilator. Bradykinin produces in vitro relaxation of rat arterial smooth muscle and constriction of intestinal smooth muscle. May target bradykinin receptors (BDKRB). This is Kininogen-1 from Bombina orientalis (Oriental fire-bellied toad).